The following is a 239-amino-acid chain: 1-(5-phosphoribosyl)-5-[(5-phosphoribosylamino)methylideneamino] imidazole-4-carboxamide isomerase (239 aa).

The Proton acceptor role is filled by Asp-8. Asp-129 serves as the catalytic Proton donor.

This sequence belongs to the HisA/HisF family.

The protein localises to the cytoplasm. The catalysed reaction is 1-(5-phospho-beta-D-ribosyl)-5-[(5-phospho-beta-D-ribosylamino)methylideneamino]imidazole-4-carboxamide = 5-[(5-phospho-1-deoxy-D-ribulos-1-ylimino)methylamino]-1-(5-phospho-beta-D-ribosyl)imidazole-4-carboxamide. Its pathway is amino-acid biosynthesis; L-histidine biosynthesis; L-histidine from 5-phospho-alpha-D-ribose 1-diphosphate: step 4/9. The polypeptide is 1-(5-phosphoribosyl)-5-[(5-phosphoribosylamino)methylideneamino] imidazole-4-carboxamide isomerase (Bacillus thuringiensis subsp. konkukian (strain 97-27)).